A 93-amino-acid polypeptide reads, in one-letter code: Small ribosomal subunit protein uS19 (93 aa).

Belongs to the universal ribosomal protein uS19 family.

In terms of biological role, protein S19 forms a complex with S13 that binds strongly to the 16S ribosomal RNA. This Streptococcus gordonii (strain Challis / ATCC 35105 / BCRC 15272 / CH1 / DL1 / V288) protein is Small ribosomal subunit protein uS19.